Consider the following 1179-residue polypeptide: Integrin alpha-1 (1179 aa).

The first 28 residues, 1 to 28 (MAPRPRARPGVAVACCWLLTVVLRCCVS), serve as a signal peptide directing secretion. Over 29–1141 (FNVDVKNSMT…SKDGLPGRVP (1113 aa)) the chain is Extracellular. The FG-GAP 1 repeat unit spans residues 30–91 (NVDVKNSMTF…CPVGRGESLP (62 aa)). Asn-74 carries an N-linked (GlcNAc...) asparagine glycan. A disulfide bridge connects residues Cys-82 and Cys-92. Residues Asn-100, Asn-105, Asn-112, Asn-217, Asn-317, Asn-341, Asn-402, Asn-418, and Asn-460 are each glycosylated (N-linked (GlcNAc...) asparagine). An FG-GAP 2 repeat occupies 101 to 160 (TSIPNVTEVKENMTFGSTLVTNPNGGFLACGPLYAYRCGHLHYTTGICSDVSPTFQVVNS). A VWFA domain is found at 161-360 (IAPVQECSTQ…IVKTLGERIF (200 aa)). One copy of the FG-GAP 3 repeat lies at 365 to 417 (TADQSAASFEMEMSQTGFSAHYSQDWVMLGAVGAYDWNGTVVMQKASQIIIPR). 4 FG-GAP repeats span residues 422–475 (NVES…DGNI), 476–538 (KILQ…RFEY), 557–615 (SCTT…TIRK), and 619–679 (QRIP…FEPN). Ca(2+)-binding residues include Asp-498, Asp-500, Asp-502, and Asp-506. Asn-532 carries N-linked (GlcNAc...) asparagine glycosylation. Ca(2+)-binding residues include Asp-580, Asn-582, Asp-584, Asp-588, Asp-642, Asn-644, Asp-646, and Asp-650. A disulfide bridge links Cys-688 with Cys-697. 3 N-linked (GlcNAc...) asparagine glycosylation sites follow: Asn-699, Asn-748, and Asn-780. A disulfide bridge links Cys-703 with Cys-756. A disulfide bond links Cys-808 and Cys-814. 8 N-linked (GlcNAc...) asparagine glycosylation sites follow: Asn-840, Asn-883, Asn-908, Asn-915, Asn-939, Asn-966, Asn-974, and Asn-1008. Cys-878 and Cys-886 are disulfide-bonded. Disulfide bonds link Cys-1030–Cys-1062 and Cys-1065–Cys-1072. N-linked (GlcNAc...) asparagine glycans are attached at residues Asn-1073, Asn-1083, Asn-1102, and Asn-1113. A helical transmembrane segment spans residues 1142 to 1164 (LWVILLSAFAGLLLLMLLILALW). Over 1165-1179 (KIGFFKRPLKKKMEK) the chain is Cytoplasmic. The GFFKR motif signature appears at 1167 to 1171 (GFFKR).

The protein belongs to the integrin alpha chain family. In terms of assembly, heterodimer of an alpha and a beta subunit. Alpha-1 associates with beta-1. Interacts with RAB21. Interacts (via cytoplasmic domain) with PTPN2; activates PTPN2 phosphatase activity towards EGFR and negatively regulates EGF signaling.

Its subcellular location is the membrane. In terms of biological role, integrin alpha-1/beta-1 is a receptor for laminin and collagen. It recognizes the proline-hydroxylated sequence G-F-P-G-E-R in collagen. Involved in anchorage-dependent, negative regulation of EGF-stimulated cell growth. The protein is Integrin alpha-1 (ITGA1) of Homo sapiens (Human).